The following is a 130-amino-acid chain: Large ribosomal subunit protein bL19 (130 aa).

Belongs to the bacterial ribosomal protein bL19 family.

Its function is as follows. This protein is located at the 30S-50S ribosomal subunit interface and may play a role in the structure and function of the aminoacyl-tRNA binding site. The sequence is that of Large ribosomal subunit protein bL19 from Burkholderia orbicola (strain MC0-3).